The primary structure comprises 280 residues: Ribosomal RNA small subunit methyltransferase A (280 aa).

Residues His-15, Leu-17, Gly-42, Glu-64, Asp-89, and Asn-109 each coordinate S-adenosyl-L-methionine.

This sequence belongs to the class I-like SAM-binding methyltransferase superfamily. rRNA adenine N(6)-methyltransferase family. RsmA subfamily.

It localises to the cytoplasm. It catalyses the reaction adenosine(1518)/adenosine(1519) in 16S rRNA + 4 S-adenosyl-L-methionine = N(6)-dimethyladenosine(1518)/N(6)-dimethyladenosine(1519) in 16S rRNA + 4 S-adenosyl-L-homocysteine + 4 H(+). Its function is as follows. Specifically dimethylates two adjacent adenosines (A1518 and A1519) in the loop of a conserved hairpin near the 3'-end of 16S rRNA in the 30S particle. May play a critical role in biogenesis of 30S subunits. The sequence is that of Ribosomal RNA small subunit methyltransferase A from Prochlorococcus marinus (strain MIT 9313).